The following is a 106-amino-acid chain: uncharacterized protein (106 aa).

This is an uncharacterized protein from Saccharomyces cerevisiae (strain ATCC 204508 / S288c) (Baker's yeast).